The primary structure comprises 311 residues: L-lactate dehydrogenase 2 (311 aa).

Residues Val-14, Asp-35, and Arg-40 each contribute to the NAD(+) site. Position 90 (Arg-90) interacts with substrate. Residues Ser-103, 120–122 (ATN), and Thr-145 each bind NAD(+). 122-125 (NPCD) provides a ligand contact to substrate. 150–153 (DTTR) lines the substrate pocket. Residue His-177 is the Proton acceptor of the active site. Residue Thr-230 coordinates substrate.

The protein belongs to the LDH/MDH superfamily. LDH family. In terms of assembly, homotetramer.

Its subcellular location is the cytoplasm. The enzyme catalyses (S)-lactate + NAD(+) = pyruvate + NADH + H(+). The protein operates within fermentation; pyruvate fermentation to lactate; (S)-lactate from pyruvate: step 1/1. Catalyzes the conversion of lactate to pyruvate. This is L-lactate dehydrogenase 2 from Listeria innocua serovar 6a (strain ATCC BAA-680 / CLIP 11262).